We begin with the raw amino-acid sequence, 1425 residues long: Ferlin 1 (1425 aa).

3 consecutive C2 domains span residues 1–123 (MAAK…RQWV), 161–281 (VNEG…PRWF), and 506–629 (TKAG…PVWL). Residues 871-952 (RPQASRLSRE…ALAASPEEET (82 aa)) form a disordered region. Composition is skewed to basic and acidic residues over residues 877-889 (LSRE…ERGK) and 912-926 (ETEK…KKEG). C2 domains are found at residues 1032–1160 (EMDA…EQMV) and 1192–1319 (RADY…QQHY). Residues 1404–1424 (TGVWMTVAGIIALVIFVMFLL) form a helical membrane-spanning segment.

It belongs to the ferlin family.

It localises to the golgi apparatus. It is found in the trans-Golgi network membrane. The protein localises to the endosome membrane. The protein resides in the cytoplasm. In terms of biological role, plays a role in microneme replenishment, probably at the vesicular trafficking level. Directs microneme organelle traffic differentially based on microneme population. Regulates microneme secretion: facilitates microneme membrane fusion with the plasma membrane. The protein is Ferlin 1 of Toxoplasma gondii.